The sequence spans 288 residues: Protoheme IX farnesyltransferase (288 aa).

The next 9 helical transmembrane spans lie at 6–26, 44–64, 89–109, 111–131, 138–158, 169–189, 213–233, 238–258, and 268–288; these read VILYLLEVLKPKIILGNLLSL, FLDSLSLFLIVGSACVLNNVI, LAILIAMFMLFLGLILCVKFI, VVCFCLFLLGWLTYIFLYSFF, ISTIVGSISGSLPPIVGYCSV, LLIMFALWQIPHSYAICILHF, IILHIILFFISVIVLTFINSI, LIISFFLCLTWLYYSLLELTI, and IFRWSIIVIFLLNIIMLFGFV.

Belongs to the UbiA prenyltransferase family. Protoheme IX farnesyltransferase subfamily.

It localises to the cell membrane. The catalysed reaction is heme b + (2E,6E)-farnesyl diphosphate + H2O = Fe(II)-heme o + diphosphate. It functions in the pathway porphyrin-containing compound metabolism; heme O biosynthesis; heme O from protoheme: step 1/1. Functionally, converts heme B (protoheme IX) to heme O by substitution of the vinyl group on carbon 2 of heme B porphyrin ring with a hydroxyethyl farnesyl side group. This chain is Protoheme IX farnesyltransferase, found in Buchnera aphidicola subsp. Baizongia pistaciae (strain Bp).